A 74-amino-acid chain; its full sequence is Small ribosomal subunit protein eS28 (74 aa).

Belongs to the eukaryotic ribosomal protein eS28 family.

The protein is Small ribosomal subunit protein eS28 of Halobacterium salinarum (strain ATCC 29341 / DSM 671 / R1).